A 208-amino-acid polypeptide reads, in one-letter code: Translation initiation factor 2 subunit beta (208 aa).

One can recognise a TRAM domain in the interval 145-203 (VIEEGETYELRIESVGSKGDGIAKVDKYLIFVPNTSKGEIVKAKVKKISGTLAFAEIVE).

It belongs to the eIF-2-beta/eIF-5 family. In terms of assembly, heterotrimer composed of an alpha, a beta and a gamma chain.

In terms of biological role, eIF-2 functions in the early steps of protein synthesis by forming a ternary complex with GTP and initiator tRNA. In Methanothrix thermoacetophila (strain DSM 6194 / JCM 14653 / NBRC 101360 / PT) (Methanosaeta thermophila), this protein is Translation initiation factor 2 subunit beta.